Here is a 577-residue protein sequence, read N- to C-terminus: MGVQLRLNPCSSSSAATSPSTFHNGTPYFCKKFNFLPFRTQPLNWVSGIYSRIQPRKHFEVFSSNGFPLNAVSVQDVQVPLTELGSGDTTVSITVIGASGDLAKKKILPALFALFYEDCLPENFVVFGYSRTKLSDEELRNMISTTLTCRIDKRENCDAKMEHFLERCFYHSGQYNSEDDFAELDYKLKEKEGCRVSNRLFYLSIPPNIFVDVVRCASLKASSTSGWTRVIVEKPFGRDLESSSELTRSLKKYLTEEQIFRIDHYLGKELVENLSVLRFSNLVFEPLWSRNYIRNVQFIFSEDFGTEGRGGYFDHYGIIRDIMQNHLLQILALFAMETPVSLDAEDIRNEKVKVLRSMRPLQLEDVVLGQYKGHSNGAKSYPAYTDDPTVPNGSITPTFSAAALFIDNARWDGVPFLMKAGKALHTKRAEIRVQFRHVPGNLYKRNFGTDMDKATNELVLRLQPDEAIYLKINNKVPGLGMRLDRSDLNLLYKAKYRGEIPDAYERLLLDAIEGERRLFIRSDELDAAWALFTPLLKELEEKKIAPELYPYGSRGPVGAHYLAAKHNVRWGDLSGDD.

The segment at 1 to 20 (MGVQLRLNPCSSSSAATSPS) is disordered. The N-terminal 63 residues, 1-63 (MGVQLRLNPC…QPRKHFEVFS (63 aa)), are a transit peptide targeting the chloroplast. Residues 11–20 (SSSSAATSPS) are compositionally biased toward low complexity. Residues 97–104 (GASGDLAK) and Arg-131 each bind NADP(+). Residues Cys-149 and Cys-157 are joined by a disulfide bond. Lys-234 is an NADP(+) binding site. Residues Lys-234, 264–268 (HYLGK), Glu-302, and Asp-321 contribute to the D-glucose 6-phosphate site. Residue His-326 is the Proton acceptor of the active site. NADP(+) is bound at residue Lys-419. D-glucose 6-phosphate contacts are provided by Lys-422 and Lys-427. 3 residues coordinate NADP(+): Arg-428, Arg-432, and Arg-461. Gln-463 is a binding site for D-glucose 6-phosphate. NADP(+)-binding positions include 469–471 (YLK) and Arg-554.

This sequence belongs to the glucose-6-phosphate dehydrogenase family. In terms of assembly, homodimer. Green tissues, leaves and chloroplasts.

It localises to the plastid. Its subcellular location is the chloroplast. It carries out the reaction D-glucose 6-phosphate + NADP(+) = 6-phospho-D-glucono-1,5-lactone + NADPH + H(+). The protein operates within carbohydrate degradation; pentose phosphate pathway; D-ribulose 5-phosphate from D-glucose 6-phosphate (oxidative stage): step 1/3. With respect to regulation, regulated by metabolites. Post-translationally inactivated by cysteine-mediated redox modification via the ferredoxin-thioredoxin system in the light and this avoids futile cycles with photosynthetic CO2 fixation. Functionally, catalyzes the rate-limiting step of the oxidative pentose-phosphate pathway, which represents a route for the dissimilation of carbohydrates besides glycolysis. The main function of this enzyme is to provide reducing power (NADPH) and pentose phosphates for fatty acid and nucleic acid synthesis which are involved in membrane synthesis and cell division. The polypeptide is Glucose-6-phosphate 1-dehydrogenase, chloroplastic (Solanum tuberosum (Potato)).